A 193-amino-acid polypeptide reads, in one-letter code: Acyl carrier protein phosphodiesterase (193 aa).

This sequence belongs to the AcpH family.

It catalyses the reaction holo-[ACP] + H2O = apo-[ACP] + (R)-4'-phosphopantetheine + H(+). In terms of biological role, converts holo-ACP to apo-ACP by hydrolytic cleavage of the phosphopantetheine prosthetic group from ACP. In Salmonella paratyphi A (strain ATCC 9150 / SARB42), this protein is Acyl carrier protein phosphodiesterase.